The chain runs to 1018 residues: Serine/threonine-protein phosphatase BSL2 (1018 aa).

The segment at 1-75 (MDEDSSMVAD…AAAVVGQEQQ (75 aa)) is disordered. Over residues 41–57 (SPPPEGGSVPTPPPSDP) the composition is skewed to pro residues. Low complexity predominate over residues 63–75 (QQQAAAVVGQEQQ). 5 Kelch repeats span residues 149-195 (TSAG…VATA), 253-301 (YLMA…TASA), 306-356 (LLLL…VFVN), 362-409 (SGGA…DAAG), and 430-479 (LIFI…RLPG). Positions 569–590 (DRDCGAEATPSGKPTFSLIKPD) are disordered. S627 bears the Phosphoserine mark. D720, H722, D754, and N786 together coordinate Mn(2+). Residue H787 is the Proton donor of the active site. H839 and H918 together coordinate Mn(2+). A Phosphoserine modification is found at S975. Positions 994–1011 (ANRPATPTRGRPQNSNDR) are enriched in polar residues. Positions 994–1018 (ANRPATPTRGRPQNSNDRGGSLAWM) are disordered.

The protein belongs to the PPP phosphatase family. BSU subfamily. In terms of assembly, interacts with BSK8. Requires Mn(2+) as cofactor. As to expression, expressed throughout the plant, with a higher level in younger parts.

The protein resides in the cytoplasm. It is found in the cell membrane. The protein localises to the nucleus. It carries out the reaction O-phospho-L-seryl-[protein] + H2O = L-seryl-[protein] + phosphate. The catalysed reaction is O-phospho-L-threonyl-[protein] + H2O = L-threonyl-[protein] + phosphate. Phosphatase involved in elongation process, probably by acting as a regulator of brassinolide signaling. The chain is Serine/threonine-protein phosphatase BSL2 (BSL2) from Arabidopsis thaliana (Mouse-ear cress).